Reading from the N-terminus, the 354-residue chain is Ion-translocating oxidoreductase complex subunit D (354 aa).

A run of 3 helical transmembrane segments spans residues Ile-9–Phe-28, Leu-67–Val-87, and Val-117–Gly-137. Thr-165 carries the FMN phosphoryl threonine modification. 5 helical membrane-spanning segments follow: residues Gly-200–Leu-220, Ile-222–Ala-242, Val-249–Ile-269, Pro-277–Ile-297, and Gly-301–Ile-321.

Belongs to the NqrB/RnfD family. As to quaternary structure, the complex is composed of six subunits: RnfA, RnfB, RnfC, RnfD, RnfE and RnfG. Requires FMN as cofactor.

Its subcellular location is the cell inner membrane. Functionally, part of a membrane-bound complex that couples electron transfer with translocation of ions across the membrane. The chain is Ion-translocating oxidoreductase complex subunit D from Stutzerimonas stutzeri (Pseudomonas stutzeri).